We begin with the raw amino-acid sequence, 352 residues long: Protein RecA (352 aa).

67–74 is a binding site for ATP; that stretch reads GPESSGKT. The tract at residues 330–352 is disordered; it reads STPKPEAESQEKAAAAQDDDSLV.

This sequence belongs to the RecA family.

It is found in the cytoplasm. Functionally, can catalyze the hydrolysis of ATP in the presence of single-stranded DNA, the ATP-dependent uptake of single-stranded DNA by duplex DNA, and the ATP-dependent hybridization of homologous single-stranded DNAs. It interacts with LexA causing its activation and leading to its autocatalytic cleavage. This chain is Protein RecA, found in Chromohalobacter salexigens (strain ATCC BAA-138 / DSM 3043 / CIP 106854 / NCIMB 13768 / 1H11).